The chain runs to 231 residues: Phosphatidylserine decarboxylase proenzyme (231 aa).

Ser-188 functions as the Schiff-base intermediate with substrate; via pyruvic acid in the catalytic mechanism. Position 188 is a pyruvic acid (Ser); by autocatalysis (Ser-188).

It belongs to the phosphatidylserine decarboxylase family. PSD-A subfamily. In terms of assembly, heterodimer of a large membrane-associated beta subunit and a small pyruvoyl-containing alpha subunit. It depends on pyruvate as a cofactor. In terms of processing, is synthesized initially as an inactive proenzyme. Formation of the active enzyme involves a self-maturation process in which the active site pyruvoyl group is generated from an internal serine residue via an autocatalytic post-translational modification. Two non-identical subunits are generated from the proenzyme in this reaction, and the pyruvate is formed at the N-terminus of the alpha chain, which is derived from the carboxyl end of the proenzyme. The post-translation cleavage follows an unusual pathway, termed non-hydrolytic serinolysis, in which the side chain hydroxyl group of the serine supplies its oxygen atom to form the C-terminus of the beta chain, while the remainder of the serine residue undergoes an oxidative deamination to produce ammonia and the pyruvoyl prosthetic group on the alpha chain.

The protein resides in the cell membrane. It carries out the reaction a 1,2-diacyl-sn-glycero-3-phospho-L-serine + H(+) = a 1,2-diacyl-sn-glycero-3-phosphoethanolamine + CO2. It functions in the pathway phospholipid metabolism; phosphatidylethanolamine biosynthesis; phosphatidylethanolamine from CDP-diacylglycerol: step 2/2. Its function is as follows. Catalyzes the formation of phosphatidylethanolamine (PtdEtn) from phosphatidylserine (PtdSer). This is Phosphatidylserine decarboxylase proenzyme from Rickettsia peacockii (strain Rustic).